Reading from the N-terminus, the 693-residue chain is Protein VP3 (693 aa).

The segment at 187 to 255 (FMRLLRMRFA…VISELKGLGS (69 aa)) is N7-methyltransferase activity. The segment at 256 to 432 (YSEKKISEFG…KRQKIKVTKS (177 aa)) is 2'-O-methyltransferase activity. Residues 433–559 (LMYNAINTIY…NHIYIIPNAR (127 aa)) are N7-methyltransferase activity. A GTase/RTPase activity region spans residues 560 to 693 (DENNFDTFGS…KMMEIWEVQV (134 aa)).

This sequence belongs to the rotavirus VP3 family. As to quaternary structure, interacts with VP1. Interacts with VP2.

The protein resides in the virion. It catalyses the reaction a 5'-end diphospho-ribonucleoside in mRNA + GTP + H(+) = a 5'-end (5'-triphosphoguanosine)-ribonucleoside in mRNA + diphosphate. The catalysed reaction is a 5'-end (5'-triphosphoguanosine)-ribonucleoside in mRNA + S-adenosyl-L-methionine = a 5'-end (N(7)-methyl 5'-triphosphoguanosine)-ribonucleoside in mRNA + S-adenosyl-L-homocysteine. In terms of biological role, multifunctional enzyme involved in mRNA capping. Catalyzes the formation of the 5' cap structure on the viral plus-strand transcripts. Specifically binds to GTP and displays guanylyltransferase and methyltransferase activities. Has affinity for ssRNA but not for dsRNA. Capping activity is non-specific and caps RNAs that initiate with either a G or an A residue. Together with VP1 polymerase, forms a VP1-VP3 complex positioned near the channels situated at each of the five-fold vertices of the core. Following infection, the outermost layer of the virus is lost, leaving a double-layered particle (DLP) made up of the core and VP6 shell. VP1 then catalyzes the transcription of fully conservative plus-strand genomic RNAs that are capped by VP3 and extruded through the DLP's channels into the cytoplasm where they function as mRNAs for translation of viral proteins. DLPs probably have an RNA triphosphatase activity as well, whereas open cores do not. The protein is Protein VP3 of Homo sapiens (Human).